The following is a 382-amino-acid chain: WD repeat-containing protein 55 (382 aa).

Over residues 1–11 the composition is skewed to basic and acidic residues; it reads MDRMCEERAAE. The tract at residues 1-31 is disordered; it reads MDRMCEERAAEDGSDEEDPDATEAPARIRDT. A compositionally biased stretch (acidic residues) spans 12-21; it reads DGSDEEDPDA. The residue at position 14 (Ser-14) is a Phosphoserine. WD repeat units follow at residues 36-75, 82-121, 125-163, 166-205, 208-247, 250-289, and 293-332; these read VLEAPASGLAFHPARDLLAAGDVDGDVFVFSYSCQEGETK, HHLKSCRAVVFSEDGQKLVTVSKDKAIHFLDVELGRLERR, AHGAPINSLLLVDENVLATGDDTGGIRLWDQRKEGPLMD, QHEEYIADMALDPDKKLLLTASGDGCLGVFNIKRRRFELL, PQSGDLTSVTLMKYGRKVACGSSEGTIYLFNWDGFGATSD, ALRAESIDCMVPVTESLLCAGSTDGVIRAVNILPNRVVGS, and HAEEPVENLALSHCGCFLASSGHDQRLKFWDMAQLRALVV. Residues Ser-354 and Ser-381 each carry the phosphoserine modification.

Belongs to the WD repeat WDR55 family.

Its subcellular location is the nucleus. It is found in the nucleolus. The protein localises to the cytoplasm. Nucleolar protein that acts as a modulator of rRNA synthesis. Plays a central role during organogenesis. In Bos taurus (Bovine), this protein is WD repeat-containing protein 55 (WDR55).